The chain runs to 146 residues: Hemoglobin subunit beta (146 aa).

One can recognise a Globin domain in the interval 2–146 (FLTPEENGHV…VANALAHKYH (145 aa)). T12 carries the phosphothreonine modification. Phosphoserine is present on S44. At K59 the chain carries N6-acetyllysine. H63 lines the heme b pocket. Position 82 is an N6-acetyllysine (K82). Residue H92 coordinates heme b. The residue at position 93 (C93) is an S-nitrosocysteine. N6-acetyllysine is present on K144.

Belongs to the globin family. As to quaternary structure, heterotetramer of two alpha chains and two beta chains. As to expression, red blood cells.

Functionally, involved in oxygen transport from the lung to the various peripheral tissues. This chain is Hemoglobin subunit beta (HBB), found in Hapalemur griseus (Gray gentle lemur).